The sequence spans 456 residues: Cyclic AMP-responsive element-binding protein 3-like protein 3 (456 aa).

2 disordered regions span residues 1 to 20 (MDGDLAIGKMASSTSPMGPI) and 47 to 120 (GHGE…KGPC). Residues 1–317 (MDGDLAIGKM…STSKSAQTGT (317 aa)) are Cytoplasmic-facing. The span at 71-85 (DSDSPTWSPAASDSG) shows a compositional bias: polar residues. A bZIP domain is found at 238 to 301 (MLKKIRRKIR…LSLLEQLKKL (64 aa)). The tract at residues 240 to 269 (KKIRRKIRNKQSAQESRKKKKEYIDGLETR) is basic motif. The segment at 280–301 (LQRKVLHLEKQNLSLLEQLKKL) is leucine-zipper. Lys289 participates in a covalent cross-link: Glycyl lysine isopeptide (Lys-Gly) (interchain with G-Cter in ubiquitin). The helical; Signal-anchor for type II membrane protein transmembrane segment at 318–338 (CIAVLLFSFALIVLPSISPFA) threads the bilayer. Residues 339–456 (SNRAESPGDF…VGLEAAGGEL (118 aa)) are Lumenal-facing. Disordered regions lie at residues 365–423 (RVAP…QGNS) and 435–456 (CAPPEPAVSPGHVGLEAAGGEL). N-linked (GlcNAc...) asparagine glycosylation is found at Asn408 and Asn415.

This sequence belongs to the bZIP family. ATF subfamily. As to quaternary structure, binds DNA as a dimer. May form homodimers. Interacts with ATF6. Interacts with SYNV1/HRD1; this interaction leads to CREB3L3 ubiquitination and proteasomal degradation. In terms of processing, controlled by regulated intramembrane proteolysis (RIP). Following ER stress a fragment containing the cytoplasmic transcription factor domain is released by proteolysis. The cleavage seems to be performed sequentially by site-1 and site-2 proteases (PS1 and PS2). N-glycosylation is required for optimal proteolytic activation. Post-translationally, ubiquitinated at Lys-289 by SYNV1/HRD1 via 'Lys-27'-linked ubiquitin.

It is found in the endoplasmic reticulum membrane. Its subcellular location is the nucleus. Its function is as follows. Transcription factor that may act during endoplasmic reticulum stress by activating unfolded protein response target genes. Activated in response to cAMP stimulation. In vitro, binds the cAMP response element (CRE). Activates transcription through box-B element and CRE. Seems to function synergistically with ATF6. In acute inflammatory response, may activate expression of acute phase response (APR) genes. May be involved in growth suppression. Regulates FGF21 transcription. Plays a crucial role in the regulation of triglyceride metabolism and is required for the maintenance of normal plasma triglyceride concentrations. This Bos taurus (Bovine) protein is Cyclic AMP-responsive element-binding protein 3-like protein 3 (CREB3L3).